Here is a 488-residue protein sequence, read N- to C-terminus: Acetyl-CoA decarbonylase/synthase complex subunit gamma (488 aa).

Residues 1-61 (MPKKISAMDI…FEKNKKKIIE (61 aa)) enclose the 4Fe-4S domain. [4Fe-4S] cluster contacts are provided by cysteine 19, cysteine 22, cysteine 27, and cysteine 44.

Heterodimer of delta and gamma chains. The ACDS complex is made up of alpha, epsilon, beta, gamma and delta chains with a probable stoichiometry of (alpha(2)epsilon(2))(4)-beta(8)-(gamma(1)delta(1))(8). The cofactor is corrinoid. Requires [4Fe-4S] cluster as cofactor.

It catalyses the reaction 5,6,7,8-tetrahydrosarcinapterin + methyl-Co(III)-[corrinoid Fe-S protein] = 5-methyltetrahydrosarcinapterin + Co(I)-[corrinoid Fe-S protein] + H(+). In terms of biological role, part of a complex that catalyzes the reversible cleavage of acetyl-CoA, allowing autotrophic growth from CO(2). The polypeptide is Acetyl-CoA decarbonylase/synthase complex subunit gamma (Methanocaldococcus jannaschii (strain ATCC 43067 / DSM 2661 / JAL-1 / JCM 10045 / NBRC 100440) (Methanococcus jannaschii)).